The sequence spans 414 residues: DNA polymerase IV 1 (414 aa).

In terms of domain architecture, UmuC spans 8–189 (IFHIDMNSFY…LPVGEMHGVG (182 aa)). Aspartate 12 and aspartate 108 together coordinate Mg(2+). The active site involves glutamate 109. The tract at residues 391–414 (LKKEESKTKGTSFNKDFFQDEKKS) is disordered.

It belongs to the DNA polymerase type-Y family. In terms of assembly, monomer. The cofactor is Mg(2+).

It localises to the cytoplasm. The enzyme catalyses DNA(n) + a 2'-deoxyribonucleoside 5'-triphosphate = DNA(n+1) + diphosphate. Functionally, poorly processive, error-prone DNA polymerase involved in untargeted mutagenesis. Copies undamaged DNA at stalled replication forks, which arise in vivo from mismatched or misaligned primer ends. These misaligned primers can be extended by PolIV. Exhibits no 3'-5' exonuclease (proofreading) activity. May be involved in translesion synthesis (TSL), in conjunction with the beta clamp from PolIII. This chain is DNA polymerase IV 1 (dinB1), found in Bacillus subtilis (strain 168).